The chain runs to 631 residues: 1-deoxy-D-xylulose-5-phosphate synthase (631 aa).

Residues His72 and 113–115 (GHA) contribute to the thiamine diphosphate site. Residue Asp144 coordinates Mg(2+). Residues 145–146 (GA), Asn174, Tyr287, and Glu370 contribute to the thiamine diphosphate site. Asn174 lines the Mg(2+) pocket.

This sequence belongs to the transketolase family. DXPS subfamily. Homodimer. Mg(2+) is required as a cofactor. Thiamine diphosphate serves as cofactor.

It catalyses the reaction D-glyceraldehyde 3-phosphate + pyruvate + H(+) = 1-deoxy-D-xylulose 5-phosphate + CO2. Its pathway is metabolic intermediate biosynthesis; 1-deoxy-D-xylulose 5-phosphate biosynthesis; 1-deoxy-D-xylulose 5-phosphate from D-glyceraldehyde 3-phosphate and pyruvate: step 1/1. Catalyzes the acyloin condensation reaction between C atoms 2 and 3 of pyruvate and glyceraldehyde 3-phosphate to yield 1-deoxy-D-xylulose-5-phosphate (DXP). The protein is 1-deoxy-D-xylulose-5-phosphate synthase of Prochlorococcus marinus (strain MIT 9515).